The chain runs to 224 residues: MSEDHFDDELDGQGGGGSRHPMAARFRGYLPVVVDVETGGFNSATDALLEIAATTIAMDEKGFVYPDHTYFFRVEPFEGANVEPAALEFTGIKLDHPLRMAVSEETALTDIFRGVRKALKANGCKRAILVGHNSSFDLGFLNAAVARLDMKRNPFHPFSSFDTATLAGLAYGQTVLAKACQAADIDFDGREAHSARYDTEKTAELFCGIVNRWKQMGGWEDFDD.

One can recognise an Exonuclease domain in the interval valine 32 to phenylalanine 206. Aspartate 35, glutamate 37, histidine 193, and aspartate 198 together coordinate Mg(2+). The Proton donor/acceptor role is filled by histidine 193.

The protein belongs to the RNase T family. Homodimer. It depends on Mg(2+) as a cofactor.

Trims short 3' overhangs of a variety of RNA species, leaving a one or two nucleotide 3' overhang. Responsible for the end-turnover of tRNA: specifically removes the terminal AMP residue from uncharged tRNA (tRNA-C-C-A). Also appears to be involved in tRNA biosynthesis. The sequence is that of Ribonuclease T from Pseudomonas fluorescens (strain Pf0-1).